The chain runs to 342 residues: Ketol-acid reductoisomerase (NADP(+)) (342 aa).

One can recognise a KARI N-terminal Rossmann domain in the interval 2-181 (VKVYYNGDIK…GGARAGVLET (180 aa)). Residues 25-28 (YGSQ), Arg-48, Ser-52, and 82-85 (DEQQ) contribute to the NADP(+) site. His-107 is an active-site residue. Gly-133 contributes to the NADP(+) binding site. In terms of domain architecture, KARI C-terminal knotted spans 182 to 327 (TFKEETETDL…RQLREMMPFV (146 aa)). Positions 190, 194, 226, and 230 each coordinate Mg(2+). Residue Ser-251 coordinates substrate.

This sequence belongs to the ketol-acid reductoisomerase family. Mg(2+) is required as a cofactor.

The enzyme catalyses (2R)-2,3-dihydroxy-3-methylbutanoate + NADP(+) = (2S)-2-acetolactate + NADPH + H(+). It catalyses the reaction (2R,3R)-2,3-dihydroxy-3-methylpentanoate + NADP(+) = (S)-2-ethyl-2-hydroxy-3-oxobutanoate + NADPH + H(+). The protein operates within amino-acid biosynthesis; L-isoleucine biosynthesis; L-isoleucine from 2-oxobutanoate: step 2/4. It participates in amino-acid biosynthesis; L-valine biosynthesis; L-valine from pyruvate: step 2/4. In terms of biological role, involved in the biosynthesis of branched-chain amino acids (BCAA). Catalyzes an alkyl-migration followed by a ketol-acid reduction of (S)-2-acetolactate (S2AL) to yield (R)-2,3-dihydroxy-isovalerate. In the isomerase reaction, S2AL is rearranged via a Mg-dependent methyl migration to produce 3-hydroxy-3-methyl-2-ketobutyrate (HMKB). In the reductase reaction, this 2-ketoacid undergoes a metal-dependent reduction by NADPH to yield (R)-2,3-dihydroxy-isovalerate. The polypeptide is Ketol-acid reductoisomerase (NADP(+)) (Bacillus velezensis (strain DSM 23117 / BGSC 10A6 / LMG 26770 / FZB42) (Bacillus amyloliquefaciens subsp. plantarum)).